Reading from the N-terminus, the 146-residue chain is Large ribosomal subunit protein bL19 (146 aa).

The segment at 116–146 is disordered; that stretch reads ADRKRIDQDRAAERAAKEEAQKAQEPKASQE. The segment covering 119–146 has biased composition (basic and acidic residues); sequence KRIDQDRAAERAAKEEAQKAQEPKASQE.

Part of the 50S risobomal subunit. Contacts protein L14. Forms a bridge to the 30S subunit in the 70S ribosome, contacting the 16S rRNA.

Functionally, contacts the 16S rRNA of the 30S subunit (part of bridge B6), connecting the 2 subunits. The polypeptide is Large ribosomal subunit protein bL19 (rplS) (Thermus thermophilus (strain ATCC 27634 / DSM 579 / HB8)).